A 443-amino-acid polypeptide reads, in one-letter code: Protein king tubby (443 aa).

Disordered regions lie at residues 57–85 (TNGS…LSTI) and 98–189 (HELE…ESEG). Residues 68-85 (AVNTSRNHSNNMRSLSTI) show a composition bias toward polar residues. Residues 113 to 128 (QHQQSASHSANSTQSQ) are compositionally biased toward low complexity. A Phosphoserine modification is found at S136. Residues 148-160 (NRNVAAAAPVRPA) show a composition bias toward low complexity. The segment covering 177–186 (NGTGNGTGGE) has biased composition (gly residues).

This sequence belongs to the TUB family.

The protein localises to the cytoplasm. The protein resides in the nucleus. Its subcellular location is the cell projection. It is found in the cilium membrane. It localises to the rhabdomere. In Drosophila yakuba (Fruit fly), this protein is Protein king tubby.